Reading from the N-terminus, the 156-residue chain is MRRRKAPVREVLPDPIYGNKIITKFINSLMYDGKKSVATEIMYGAIKAIEKKNAEVKGIDVFNDAIENVKPILEVKSRRVGGATYQVPVEVRPARQQALAIRWLITFARKRSERTMVDKLANELLDAANSKGASFKKKEDTYKMAEANKAFAHYRW.

This sequence belongs to the universal ribosomal protein uS7 family. As to quaternary structure, part of the 30S ribosomal subunit. Contacts proteins S9 and S11.

Functionally, one of the primary rRNA binding proteins, it binds directly to 16S rRNA where it nucleates assembly of the head domain of the 30S subunit. Is located at the subunit interface close to the decoding center, probably blocks exit of the E-site tRNA. The sequence is that of Small ribosomal subunit protein uS7 from Campylobacter concisus (strain 13826).